A 165-amino-acid chain; its full sequence is Interferon gamma (165 aa).

Positions 1 to 23 (MKYTSYILAFQLCIVLGSLGCYC) are cleaved as a signal peptide. Residue Gln-24 is modified to Pyrrolidone carboxylic acid. Residues Asn-48 and Asn-120 are each glycosylated (N-linked (GlcNAc...) asparagine).

This sequence belongs to the type II (or gamma) interferon family. Homodimer. Interacts with IFNGR1 (via extracellular domain); this interaction promotes IFNGR1 dimerization. As to expression, released primarily from activated T lymphocytes.

The protein localises to the secreted. Functionally, type II interferon produced by immune cells such as T-cells and NK cells that plays crucial roles in antimicrobial, antiviral, and antitumor responses by activating effector immune cells and enhancing antigen presentation. Primarily signals through the JAK-STAT pathway after interaction with its receptor IFNGR1 to affect gene regulation. Upon IFNG binding, IFNGR1 intracellular domain opens out to allow association of downstream signaling components JAK2, JAK1 and STAT1, leading to STAT1 activation, nuclear translocation and transcription of IFNG-regulated genes. Many of the induced genes are transcription factors such as IRF1 that are able to further drive regulation of a next wave of transcription. Plays a role in class I antigen presentation pathway by inducing a replacement of catalytic proteasome subunits with immunoproteasome subunits. In turn, increases the quantity, quality, and repertoire of peptides for class I MHC loading. Increases the efficiency of peptide generation also by inducing the expression of activator PA28 that associates with the proteasome and alters its proteolytic cleavage preference. Up-regulates as well MHC II complexes on the cell surface by promoting expression of several key molecules such as cathepsins B/CTSB, H/CTSH, and L/CTSL. Participates in the regulation of hematopoietic stem cells during development and under homeostatic conditions by affecting their development, quiescence, and differentiation. The chain is Interferon gamma (IFNG) from Macaca fascicularis (Crab-eating macaque).